The following is a 664-amino-acid chain: tRNA uridine 5-carboxymethylaminomethyl modification enzyme MnmG (664 aa).

Residues 14 to 19 (GGGHSG), Val-126, and Ser-183 contribute to the FAD site. Residue 277–291 (GPRYCPSIEDKIDRF) coordinates NAD(+). Position 374 (Gln-374) interacts with FAD.

The protein belongs to the MnmG family. As to quaternary structure, homodimer. Heterotetramer of two MnmE and two MnmG subunits. FAD is required as a cofactor.

It localises to the cytoplasm. Functionally, NAD-binding protein involved in the addition of a carboxymethylaminomethyl (cmnm) group at the wobble position (U34) of certain tRNAs, forming tRNA-cmnm(5)s(2)U34. The sequence is that of tRNA uridine 5-carboxymethylaminomethyl modification enzyme MnmG from Salinibacter ruber (strain DSM 13855 / M31).